A 1141-amino-acid chain; its full sequence is IgM protease (1141 aa).

The N-terminal stretch at 1–32 (MNIQERFSLRKSAVGLVSVSLLCAIYTSTVAA) is a signal peptide. C195 (nucleophile) is an active-site residue. Disordered regions lie at residues 518–544 (PDLP…STNL), 725–749 (EKDS…NVET), 781–805 (LEKD…TNVE), and 839–860 (EKDS…ESTS). Residues 526 to 544 (STVSDVDSLSSQETSSTNL) are compositionally biased toward polar residues. Low complexity-rich tracts occupy residues 738 to 749 (EPTSSESTNVET) and 795 to 805 (EPTSSESTNVE). Residues 1119–1136 (IMGVGLLTLVLGSALGLL) traverse the membrane as a helical segment.

This sequence belongs to the peptidase C66 family.

It is found in the cell membrane. The protein localises to the secreted. IgM cleavage is inhibited by iodoacetamide but not by AEBSF, bestatin, E-64, Z-LVG-CHN(2), or EDTA. Catalyzes the specific cleavage of porcine IgM bound to the bacterial surface. Can degrade only IgM but neither IgG nor IgA, and is host specific, as it exclusively cleaves porcine IgM but not IgM from six other species, including human, mouse and a closely related member of the Suidae family. Promotes survival in porcine blood. Is thus involved in a so-far-unknown mechanism of host-pathogen interaction at an early stage of the host immune response. The polypeptide is IgM protease (ide) (Streptococcus suis (strain P1/7)).